Here is a 481-residue protein sequence, read N- to C-terminus: UDP-N-acetylmuramate--L-alanine ligase (481 aa).

115–121 contributes to the ATP binding site; that stretch reads GTHGKTT.

The protein belongs to the MurCDEF family.

The protein resides in the cytoplasm. The catalysed reaction is UDP-N-acetyl-alpha-D-muramate + L-alanine + ATP = UDP-N-acetyl-alpha-D-muramoyl-L-alanine + ADP + phosphate + H(+). The protein operates within cell wall biogenesis; peptidoglycan biosynthesis. Functionally, cell wall formation. The chain is UDP-N-acetylmuramate--L-alanine ligase from Rhodospirillum rubrum (strain ATCC 11170 / ATH 1.1.1 / DSM 467 / LMG 4362 / NCIMB 8255 / S1).